A 296-amino-acid chain; its full sequence is HTH-type transcriptional regulator GltR (296 aa).

The HTH lysR-type domain occupies 1–58; it reads MNIQLLQVFLTTAREGSISKAALTLNYAQSNVTNKIQQLENDLQTKLFYRHSRGITLT. A DNA-binding region (H-T-H motif) is located at residues 18-37; the sequence is ISKAALTLNYAQSNVTNKIQ.

The protein belongs to the LysR transcriptional regulatory family.

Positive regulator of glutamate biosynthesis (gltAB genes). Negatively regulates its own expression. This chain is HTH-type transcriptional regulator GltR (gltR), found in Bacillus subtilis (strain 168).